The following is a 148-amino-acid chain: Large ribosomal subunit protein uL13 (148 aa).

The protein belongs to the universal ribosomal protein uL13 family. As to quaternary structure, part of the 50S ribosomal subunit.

In terms of biological role, this protein is one of the early assembly proteins of the 50S ribosomal subunit, although it is not seen to bind rRNA by itself. It is important during the early stages of 50S assembly. In Oenococcus oeni (strain ATCC BAA-331 / PSU-1), this protein is Large ribosomal subunit protein uL13.